The chain runs to 258 residues: 4-hydroxy-tetrahydrodipicolinate reductase (258 aa).

Residues 8 to 13, 86 to 88, and 110 to 113 contribute to the NAD(+) site; these read GGSGKM, GTT, and ATNM. The Proton donor/acceptor role is filled by His142. Position 143 (His143) interacts with (S)-2,3,4,5-tetrahydrodipicolinate. The active-site Proton donor is Lys146. 152–153 contacts (S)-2,3,4,5-tetrahydrodipicolinate; it reads GT.

It belongs to the DapB family.

Its subcellular location is the cytoplasm. It carries out the reaction (S)-2,3,4,5-tetrahydrodipicolinate + NAD(+) + H2O = (2S,4S)-4-hydroxy-2,3,4,5-tetrahydrodipicolinate + NADH + H(+). The catalysed reaction is (S)-2,3,4,5-tetrahydrodipicolinate + NADP(+) + H2O = (2S,4S)-4-hydroxy-2,3,4,5-tetrahydrodipicolinate + NADPH + H(+). It participates in amino-acid biosynthesis; L-lysine biosynthesis via DAP pathway; (S)-tetrahydrodipicolinate from L-aspartate: step 4/4. Functionally, catalyzes the conversion of 4-hydroxy-tetrahydrodipicolinate (HTPA) to tetrahydrodipicolinate. This is 4-hydroxy-tetrahydrodipicolinate reductase from Campylobacter hominis (strain ATCC BAA-381 / DSM 21671 / CCUG 45161 / LMG 19568 / NCTC 13146 / CH001A).